The chain runs to 783 residues: FYN-binding protein 1 (783 aa).

Polar residues-rich tracts occupy residues 1-18 (MAKY…SVNS) and 25-45 (GPNS…QGNA). Residues 1–502 (MAKYNTGGNP…KEKKEQEIKK (502 aa)) form a disordered region. N6-acetyllysine is present on lysine 3. Phosphoserine is present on residues serine 28 and serine 46. The segment covering 69–79 (SSEEKPDKEPK) has biased composition (basic and acidic residues). Position 225 is a phosphoserine (serine 225). Basic and acidic residues-rich tracts occupy residues 240 to 252 (PARE…DHAG) and 278 to 290 (NGEE…KIDA). Phosphoserine is present on serine 329. The span at 345 to 363 (KPLPPLFTLGPPPPKPNRP) shows a compositional bias: pro residues. The interaction with SKAP1 stretch occupies residues 348 to 448 (PPLFTLGPPP…QDGVTHSDGA (101 aa)). Over residues 374–387 (TSSGNSTSKGQTSY) the composition is skewed to polar residues. The segment covering 392–424 (LPPPPPSHPASQPPLPASHPSQPPVPSLPPRNI) has biased composition (pro residues). Acidic residues predominate over residues 451–465 (LDEEQDSEGETYEDI). Positions 456–507 (DSEGETYEDIEASKEREKKREKEEKKRLELEKKEQKEKEKKEQEIKKKFKLT) form a coiled coil. Position 457 is a phosphoserine (serine 457). The SH2-binding signature appears at 462–465 (YEDI). Residues 466 to 501 (EASKEREKKREKEEKKRLELEKKEQKEKEKKEQEIK) are compositionally biased toward basic and acidic residues. The short motif at 469–505 (KEREKKREKEEKKRLELEKKEQKEKEKKEQEIKKKFK) is the Nuclear localization signal element. The SH3 1 domain maps to 511–572 (QVIHLAKACC…KTTAVEIDYD (62 aa)). Tyrosine 571 carries the post-translational modification Phosphotyrosine. A phosphoserine mark is found at serine 573 and serine 580. Residues 595–598 (YDDV) carry the SH2-binding; to LCP2 motif. The disordered stretch occupies residues 598-678 (VAEQDDISSH…GTNVGKAKTE (81 aa)). Acidic residues-rich tracts occupy residues 620–635 (PDDD…DADD) and 646–656 (MGDEVYDDVDT). Residues 625–628 (YDGI) carry the SH2-binding; to FYN motif. Tyrosine 651 carries the phosphotyrosine modification. The Nuclear localization signal signature appears at 674–700 (KAKTEEKDLKKLKKQEKEEKDFRKKFK). In terms of domain architecture, SH3 2 spans 700 to 768 (KYDGEIRVLY…LRSYLADNDG (69 aa)).

As to quaternary structure, part of a complex consisting of SKAP2, FYB1 and PTPNS1. Part of a complex consisting of SKAP2, FYB1 and LILRB3. Part of a complex consisting of SKAP1, FYB1 and CLNK. Interacts with CLNK (via its SH2 domain); this interaction allows SKAP1 and FYB1 to recruit FYN to the complex, thus promoting the phosphorylation of CLNK by FYN. Interacts with FYN. Interacts with LCP2. Interacts with SKAP1. Interacts with SKAP2. Interacts with FASLG. Interacts with EVL. Interacts with TMEM47. Interacts with LCK. T-cell receptor ligation leads to increased tyrosine phosphorylation. In terms of tissue distribution, expressed in hematopoietic tissues such as myeloid and T-cells, spleen and thymus. Not expressed in B-cells, nor in non-lymphoid tissues.

The protein resides in the cytoplasm. It localises to the nucleus. Its subcellular location is the cell junction. Functionally, acts as an adapter protein of the FYN and LCP2 signaling cascades in T-cells. May play a role in linking T-cell signaling to remodeling of the actin cytoskeleton. Modulates the expression of IL2. Involved in platelet activation. Prevents the degradation of SKAP1 and SKAP2. May be involved in high affinity immunoglobulin epsilon receptor signaling in mast cells. This chain is FYN-binding protein 1, found in Homo sapiens (Human).